Here is a 120-residue protein sequence, read N- to C-terminus: Glycine cleavage system H protein (120 aa).

The Lipoyl-binding domain maps to 17 to 99 (VATVGITAHA…QGDGWLYRLK (83 aa)). At K58 the chain carries N6-lipoyllysine.

The protein belongs to the GcvH family. As to quaternary structure, the glycine cleavage system is composed of four proteins: P, T, L and H. Requires (R)-lipoate as cofactor.

The glycine cleavage system catalyzes the degradation of glycine. The H protein shuttles the methylamine group of glycine from the P protein to the T protein. In Methylorubrum extorquens (strain PA1) (Methylobacterium extorquens), this protein is Glycine cleavage system H protein.